Reading from the N-terminus, the 154-residue chain is MAARLCCQLDPARDVLCLRPVGAESRGRPFSGPLGTLSSPSLSAVSTDHGAHLSLRGLPVCAFSSAGPCALRFTSARRMETTVNAHQILPKVLHKRTLGLPAMSTTDLEAYFKDCVFKDWEELGEEIRLKVFVLGGCRHKLVCAPAPCNFFTSA.

The mitochondrial targeting sequence stretch occupies residues 68–117 (PCALRFTSARRMETTVNAHQILPKVLHKRTLGLPAMSTTDLEAYFKDCVF).

It belongs to the orthohepadnavirus protein X family. In terms of assembly, may form homodimer. May interact with host CEBPA, CFLAR, CREB1, DDB1, E4F1, HBXIP, HSPD1/HSP60, NFKBIA, POLR2E and SMAD4. Interacts with host SMC5-SMC6 complex and induces its degradation. Interacts with host TRPC4AP; leading to prevent ubiquitination of TRPC4AP. Interacts with host PLSCR1; this interaction promotes ubiquitination and degradation of HBx and impairs HBx-mediated cell proliferation. In terms of processing, a fraction may be phosphorylated in insect cells and HepG2 cells, a human hepatoblastoma cell line. Phosphorylated in vitro by host protein kinase C or mitogen-activated protein kinase. N-acetylated in insect cells.

The protein resides in the host cytoplasm. The protein localises to the host nucleus. It localises to the host mitochondrion. Its function is as follows. Multifunctional protein that plays a role in silencing host antiviral defenses and promoting viral transcription. Does not seem to be essential for HBV infection. May be directly involved in development of cirrhosis and liver cancer (hepatocellular carcinoma). Most of cytosolic activities involve modulation of cytosolic calcium. The effect on apoptosis is controversial depending on the cell types in which the studies have been conducted. May induce apoptosis by localizing in mitochondria and causing loss of mitochondrial membrane potential. May also modulate apoptosis by binding host CFLAR, a key regulator of the death-inducing signaling complex (DISC). Promotes viral transcription by using the host E3 ubiquitin ligase DDB1 to target the SMC5-SMC6 complex to proteasomal degradation. This host complex would otherwise bind to viral episomal DNA, and prevents its transcription. Moderately stimulates transcription of many different viral and cellular transcription elements. Promoters and enhancers stimulated by HBx contain DNA binding sites for NF-kappa-B, AP-1, AP-2, c-EBP, ATF/CREB, or the calcium-activated factor NF-AT. In Homo sapiens (Human), this protein is Protein X.